A 1374-amino-acid polypeptide reads, in one-letter code: DNA-directed RNA polymerase subunit beta (1374 aa).

This sequence belongs to the RNA polymerase beta chain family. As to quaternary structure, the RNAP catalytic core consists of 2 alpha, 1 beta, 1 beta' and 1 omega subunit. When a sigma factor is associated with the core the holoenzyme is formed, which can initiate transcription.

It carries out the reaction RNA(n) + a ribonucleoside 5'-triphosphate = RNA(n+1) + diphosphate. Its function is as follows. DNA-dependent RNA polymerase catalyzes the transcription of DNA into RNA using the four ribonucleoside triphosphates as substrates. This Rickettsia typhi (strain ATCC VR-144 / Wilmington) protein is DNA-directed RNA polymerase subunit beta.